The following is a 514-amino-acid chain: Peptide chain release factor 3 (514 aa).

Positions 8–268 constitute a tr-type G domain; sequence KKRRTFAIIS…TFLEFAPEPH (261 aa). GTP-binding positions include 17 to 24, 85 to 89, and 139 to 142; these read SHPDAGKT, DTPGH, and NKLD.

The protein belongs to the TRAFAC class translation factor GTPase superfamily. Classic translation factor GTPase family. PrfC subfamily.

It localises to the cytoplasm. In terms of biological role, increases the formation of ribosomal termination complexes and stimulates activities of RF-1 and RF-2. It binds guanine nucleotides and has strong preference for UGA stop codons. It may interact directly with the ribosome. The stimulation of RF-1 and RF-2 is significantly reduced by GTP and GDP, but not by GMP. This Streptococcus pyogenes serotype M5 (strain Manfredo) protein is Peptide chain release factor 3.